We begin with the raw amino-acid sequence, 432 residues long: Serine hydroxymethyltransferase (432 aa).

Residues L127 and 131–133 contribute to the (6S)-5,6,7,8-tetrahydrofolate site; that span reads GHL. K236 carries the N6-(pyridoxal phosphate)lysine modification.

This sequence belongs to the SHMT family. In terms of assembly, homodimer. It depends on pyridoxal 5'-phosphate as a cofactor.

The protein localises to the cytoplasm. The enzyme catalyses (6R)-5,10-methylene-5,6,7,8-tetrahydrofolate + glycine + H2O = (6S)-5,6,7,8-tetrahydrofolate + L-serine. The protein operates within one-carbon metabolism; tetrahydrofolate interconversion. It functions in the pathway amino-acid biosynthesis; glycine biosynthesis; glycine from L-serine: step 1/1. Catalyzes the reversible interconversion of serine and glycine with tetrahydrofolate (THF) serving as the one-carbon carrier. This reaction serves as the major source of one-carbon groups required for the biosynthesis of purines, thymidylate, methionine, and other important biomolecules. Also exhibits THF-independent aldolase activity toward beta-hydroxyamino acids, producing glycine and aldehydes, via a retro-aldol mechanism. This Rhizobium etli (strain ATCC 51251 / DSM 11541 / JCM 21823 / NBRC 15573 / CFN 42) protein is Serine hydroxymethyltransferase.